We begin with the raw amino-acid sequence, 487 residues long: WRKY transcription factor 1 (487 aa).

The disordered stretch occupies residues 69-104; that stretch reads QSEVDVASPVSEKAPKVSESSGALSLQSGSEGNSPF. Phosphoserine is present on Ser76. Positions 86–101 are enriched in polar residues; it reads SESSGALSLQSGSEGN. A DNA-binding region (WRKY 1) is located at residues 105-169; it reads IREKVMEDGY…YFGEHDHPKP (65 aa). The Zn(2+) site is built by Cys136, Cys141, His164, and His166. The segment at 255–287 is disordered; that stretch reads SSRITGDNTHKDYNSPTAKRRKKGGNIELSPVE. Positions 273 to 277 match the Nuclear localization signal motif; the sequence is KRRKK. The WRKY 2 DNA-binding region spans 301-366; sequence TLFDIVNDGY…YEGKHDHDMP (66 aa). Zn(2+) is bound by residues Cys332, Cys337, His361, and His363. Residues 380–487 form a disordered region; that stretch reads EVDDKEGDAN…QKPKTEPAQS (108 aa). A compositionally biased stretch (polar residues) spans 390–401; that stretch reads KTPQSSTLQSIT. Composition is skewed to basic and acidic residues over residues 429-462 and 476-487; these read LDEK…DDKT and EEQKPKTEPAQS.

The protein belongs to the WRKY group I family. As to expression, expressed to similar levels in root and flower, to a somewhat lower level in stem and to low levels in leaf and siliques.

The protein localises to the nucleus. In terms of biological role, transcription factor. Binds to a 5'-CGTTGACCGAG-3' consensus core sequence which contains a W box, a frequently occurring elicitor-responsive cis-acting element. In Arabidopsis thaliana (Mouse-ear cress), this protein is WRKY transcription factor 1.